A 181-amino-acid chain; its full sequence is Large ribosomal subunit protein uL10 (181 aa).

It belongs to the universal ribosomal protein uL10 family. In terms of assembly, part of the ribosomal stalk of the 50S ribosomal subunit. The N-terminus interacts with L11 and the large rRNA to form the base of the stalk. The C-terminus forms an elongated spine to which L12 dimers bind in a sequential fashion forming a multimeric L10(L12)X complex.

Its function is as follows. Forms part of the ribosomal stalk, playing a central role in the interaction of the ribosome with GTP-bound translation factors. In Nostoc sp. (strain PCC 7120 / SAG 25.82 / UTEX 2576), this protein is Large ribosomal subunit protein uL10.